The sequence spans 524 residues: Na(+)/H(+) antiporter NhaB (524 aa).

Helical transmembrane passes span 13 to 33 (FLGNSPDWYKLAIMGFLIINP), 98 to 118 (LLLVFMVAGIYFMKQLLLFVF), 140 to 160 (AFLSAFLDALTVIAVVISVSV), 239 to 259 (FFIRMLPVTLPVFIFGLLVCL), 304 to 324 (AIIGVWLVLALALHLAEVGLV), 325 to 345 (GLSVIILATSFCGITNEHSLG), 358 to 378 (LTVFFAVVAVIIEQSLFTPII), 448 to 468 (ATPNGQAAFLFLLTSALAPLI), and 479 to 499 (ALPYTLVMTIVGLLGVEFLLV).

The protein belongs to the NhaB Na(+)/H(+) (TC 2.A.34) antiporter family.

The protein localises to the cell inner membrane. The enzyme catalyses 2 Na(+)(in) + 3 H(+)(out) = 2 Na(+)(out) + 3 H(+)(in). Its function is as follows. Na(+)/H(+) antiporter that extrudes sodium in exchange for external protons. The sequence is that of Na(+)/H(+) antiporter NhaB from Yersinia pestis (strain Pestoides F).